The primary structure comprises 492 residues: MPRFVDRVVIHARAGSGGNGCASVHREKFKPLGGPDGGNGGRGGSIVFVVDPQVHTLLDFHFHPHISAPSGKQGMGNNRDGAAGADLEVKVPDGTVVLDENGRLLADLVGAGTRFEAAAGGRGGLGNAALASRARKAPGFALLGEPGETRELTLELKTVADVGLIGFPSAGKSSLVSAISAAKPKIADYPFTTLVPNLGVVSAGEHTFTVADVPGLIPGASAGRGLGLDFLRHIERCAVLVHVIDCATADPGRDPISDIDALEAELAAYTPTLQGDVTLGDLTERPRAVVLNKIDVPEARELAEFVRDEIAERGWPVFLVSTVAREGLQPLIFGLWQMISEYQSAQPEIVPRRPVIRPVPVDDSGFRVEPDPRQPGAFVVSGARPERWVRQTNFDNDEAVGYLADRLARLGVEEELLRLGARPGCAVTIGDMTFDWEPQTPAGQQVVLSGRGTDARLERTERVGAAERKAARRQRRTGDDAERGTTERGENT.

Positions 2 to 159 constitute an Obg domain; the sequence is PRFVDRVVIH…RELTLELKTV (158 aa). The region spanning 160-340 is the OBG-type G domain; it reads ADVGLIGFPS…LIFGLWQMIS (181 aa). GTP contacts are provided by residues 166-173, 191-195, 212-215, 292-295, and 321-323; these read GFPSAGKS, FTTLV, DVPG, NKID, and STV. Positions 173 and 193 each coordinate Mg(2+). The region spanning 358–438 is the OCT domain; it reads PVPVDDSGFR…IGDMTFDWEP (81 aa). The disordered stretch occupies residues 441–492; the sequence is PAGQQVVLSGRGTDARLERTERVGAAERKAARRQRRTGDDAERGTTERGENT. Composition is skewed to basic and acidic residues over residues 453-469 and 476-492; these read TDAR…AERK and RTGD…GENT.

Belongs to the TRAFAC class OBG-HflX-like GTPase superfamily. OBG GTPase family. Monomer. Requires Mg(2+) as cofactor.

The protein localises to the cytoplasm. An essential GTPase which binds GTP, GDP and possibly (p)ppGpp with moderate affinity, with high nucleotide exchange rates and a fairly low GTP hydrolysis rate. Plays a role in control of the cell cycle, stress response, ribosome biogenesis and in those bacteria that undergo differentiation, in morphogenesis control. This chain is GTPase Obg, found in Mycolicibacterium paratuberculosis (strain ATCC BAA-968 / K-10) (Mycobacterium paratuberculosis).